The chain runs to 604 residues: Aspartate--tRNA(Asp/Asn) ligase (604 aa).

Glutamate 175 is a binding site for L-aspartate. Positions glutamine 199–lysine 202 are aspartate. Residues arginine 221 and histidine 451 each contribute to the L-aspartate site. ATP is bound at residue arginine 221–glutamate 223. Position 485 (glutamate 485) interacts with ATP. Residue arginine 492 coordinates L-aspartate. Position 537–540 (glycine 537–arginine 540) interacts with ATP.

Belongs to the class-II aminoacyl-tRNA synthetase family. Type 1 subfamily. As to quaternary structure, homodimer.

It localises to the cytoplasm. It carries out the reaction tRNA(Asx) + L-aspartate + ATP = L-aspartyl-tRNA(Asx) + AMP + diphosphate. Its function is as follows. Aspartyl-tRNA synthetase with relaxed tRNA specificity since it is able to aspartylate not only its cognate tRNA(Asp) but also tRNA(Asn). Reaction proceeds in two steps: L-aspartate is first activated by ATP to form Asp-AMP and then transferred to the acceptor end of tRNA(Asp/Asn). This Erythrobacter litoralis (strain HTCC2594) protein is Aspartate--tRNA(Asp/Asn) ligase.